Here is a 205-residue protein sequence, read N- to C-terminus: Thymidylate kinase (205 aa).

10-17 (GTEGVGKS) is an ATP binding site.

This sequence belongs to the thymidylate kinase family.

It catalyses the reaction dTMP + ATP = dTDP + ADP. Its function is as follows. Phosphorylation of dTMP to form dTDP in both de novo and salvage pathways of dTTP synthesis. This is Thymidylate kinase from Teredinibacter turnerae (strain ATCC 39867 / T7901).